Reading from the N-terminus, the 415-residue chain is Lipid-A-disaccharide synthase (415 aa).

Residues 1 to 21 (MNSLPESGSDGQSSADPSQKA) form a disordered region.

It belongs to the LpxB family.

The enzyme catalyses a lipid X + a UDP-2-N,3-O-bis[(3R)-3-hydroxyacyl]-alpha-D-glucosamine = a lipid A disaccharide + UDP + H(+). It functions in the pathway bacterial outer membrane biogenesis; LPS lipid A biosynthesis. Its function is as follows. Condensation of UDP-2,3-diacylglucosamine and 2,3-diacylglucosamine-1-phosphate to form lipid A disaccharide, a precursor of lipid A, a phosphorylated glycolipid that anchors the lipopolysaccharide to the outer membrane of the cell. The polypeptide is Lipid-A-disaccharide synthase (Gluconobacter oxydans (strain 621H) (Gluconobacter suboxydans)).